The sequence spans 399 residues: Argininosuccinate synthase (399 aa).

Position 8–16 (8–16) interacts with ATP; it reads AYSGGLDTS. Y87 serves as a coordination point for L-citrulline. G117 lines the ATP pocket. Residues T119, N123, and D124 each contribute to the L-aspartate site. N123 contacts L-citrulline. 4 residues coordinate L-citrulline: R127, S175, E259, and Y271.

It belongs to the argininosuccinate synthase family. Type 1 subfamily. In terms of assembly, homotetramer.

It localises to the cytoplasm. It catalyses the reaction L-citrulline + L-aspartate + ATP = 2-(N(omega)-L-arginino)succinate + AMP + diphosphate + H(+). It functions in the pathway amino-acid biosynthesis; L-arginine biosynthesis; L-arginine from L-ornithine and carbamoyl phosphate: step 2/3. The chain is Argininosuccinate synthase from Corynebacterium diphtheriae (strain ATCC 700971 / NCTC 13129 / Biotype gravis).